A 523-amino-acid chain; its full sequence is NAD(P)H-quinone oxidoreductase subunit 2 (523 aa).

13 consecutive transmembrane segments (helical) span residues 30–50, 57–77, 94–114, 128–148, 182–202, 223–243, 255–275, 291–311, 317–337, 345–365, 389–409, 424–444, and 477–497; these read VGPEAAVLVAMIATLLVDLAG, WVPPICYAGLGSALVLLALQW, LAIAFRAVVALSTLLSLLISW, AAILLAATLGGMLLCGATDLV, LLVGSAAAAVFLYGASLLYGL, AALALVFVLATVAFKIAAVPF, PTPVVAFLSVGSKAAGFALAL, LLFTVLAILSMTLGNVVALAQ, MLAYSSIGQAGFVMIGLVCGT, VLYMATYLFMNLGAFACIILF, LGLSLCLLSLGGIPPMLGFFG, VLVVVGLVTSVISIYYYIGVI, and VALVLCVLVTAVGGILSNPLF.

This sequence belongs to the complex I subunit 2 family. In terms of assembly, NDH-1 can be composed of about 15 different subunits; different subcomplexes with different compositions have been identified which probably have different functions.

Its subcellular location is the cellular thylakoid membrane. The catalysed reaction is a plastoquinone + NADH + (n+1) H(+)(in) = a plastoquinol + NAD(+) + n H(+)(out). It carries out the reaction a plastoquinone + NADPH + (n+1) H(+)(in) = a plastoquinol + NADP(+) + n H(+)(out). In terms of biological role, NDH-1 shuttles electrons from an unknown electron donor, via FMN and iron-sulfur (Fe-S) centers, to quinones in the respiratory and/or the photosynthetic chain. The immediate electron acceptor for the enzyme in this species is believed to be plastoquinone. Couples the redox reaction to proton translocation, and thus conserves the redox energy in a proton gradient. Cyanobacterial NDH-1 also plays a role in inorganic carbon-concentration. The protein is NAD(P)H-quinone oxidoreductase subunit 2 of Synechococcus sp. (strain CC9311).